The primary structure comprises 418 residues: Protein YdhQ (418 aa).

The polypeptide is Protein YdhQ (ydhQ) (Escherichia coli (strain K12)).